Reading from the N-terminus, the 101-residue chain is Small ribosomal subunit protein uS14 (101 aa).

The protein belongs to the universal ribosomal protein uS14 family. In terms of assembly, part of the 30S ribosomal subunit. Contacts proteins S3 and S10.

In terms of biological role, binds 16S rRNA, required for the assembly of 30S particles and may also be responsible for determining the conformation of the 16S rRNA at the A site. The sequence is that of Small ribosomal subunit protein uS14 from Aromatoleum aromaticum (strain DSM 19018 / LMG 30748 / EbN1) (Azoarcus sp. (strain EbN1)).